The chain runs to 161 residues: Protein-export protein SecB (161 aa).

This sequence belongs to the SecB family. As to quaternary structure, homotetramer, a dimer of dimers. One homotetramer interacts with 1 SecA dimer.

The protein resides in the cytoplasm. Functionally, one of the proteins required for the normal export of preproteins out of the cell cytoplasm. It is a molecular chaperone that binds to a subset of precursor proteins, maintaining them in a translocation-competent state. It also specifically binds to its receptor SecA. This is Protein-export protein SecB from Coxiella burnetii (strain Dugway 5J108-111).